We begin with the raw amino-acid sequence, 130 residues long: Large ribosomal subunit protein bL17 (130 aa).

The protein belongs to the bacterial ribosomal protein bL17 family. As to quaternary structure, part of the 50S ribosomal subunit. Contacts protein L32.

The protein is Large ribosomal subunit protein bL17 of Photorhabdus laumondii subsp. laumondii (strain DSM 15139 / CIP 105565 / TT01) (Photorhabdus luminescens subsp. laumondii).